The following is a 765-amino-acid chain: Nucleolar transcription factor 1 (765 aa).

The residue at position 1 (methionine 1) is an N-acetylmethionine. The disordered stretch occupies residues 1–21; sequence MNGEADCPTDLEMAAPKGQDR. 2 DNA-binding regions (HMG box) span residues 112 to 180 and 196 to 264; these read PKKP…ARFR and PEKP…RDYI. Threonine 201 carries the post-translational modification Phosphothreonine. 3 positions are modified to phosphoserine: serine 273, serine 336, and serine 364. The HMG box 3 DNA-binding region spans 298 to 362; that stretch reads TKPPPNSYSL…DYEVELLRFL (65 aa). Residues 370–379 are compositionally biased toward basic and acidic residues; it reads QQRVLGEEKM. A disordered region spans residues 370-411; that stretch reads QQRVLGEEKMLNINKKQTTSPASKKPSQEGGKGGSEKPKRPV. Phosphoserine is present on residues serine 389, serine 412, serine 433, serine 435, serine 484, serine 495, serine 546, serine 584, and serine 638. 3 DNA-binding regions (HMG box) span residues 407–475, 482–549, and 568–634; these read PKRP…GGER, PESP…SEMR, and KKPP…DLWV. The disordered stretch occupies residues 456-487; it reads YKAREAALKAQSERKPGGEREDRGKLPESPKR. Residues 457 to 487 are compositionally biased toward basic and acidic residues; that stretch reads KAREAALKAQSERKPGGEREDRGKLPESPKR. A disordered region spans residues 546–576; sequence SEMRAPPAATNSSKKMKFQGEPKKPPMNGYQ. A disordered region spans residues 649-765; sequence ISNKRKNMTK…SGDSSDSGSN (117 aa). Polar residues predominate over residues 664–674; it reads PKSSRTTLQSK. Residues 677–746 show a composition bias toward acidic residues; it reads SEEDDDEEEE…DDDEDEDNES (70 aa). Over residues 747-765 the composition is skewed to low complexity; the sequence is EGSSSSSSSSGDSSDSGSN.

Homodimer. Part of Pol I pre-initiation complex (PIC), in which Pol I core assembles with RRN3 and promoter-bound UTBF and SL1/TIF-IB complex. Interacts with TOP2A in the context of Pol I complex. Interacts with TBP. Interacts with TAF1A. Interacts with RASL11A. Binds to IRS1 and PIK3CA. Interacts with DHX33. Interacts with PHF6. Interacts with CEBPA (isoform 1 and isoform 4). Interacts with DDX11. Interacts with NOP53. Interacts with ALKBH2. In terms of processing, phosphorylated and activated by PIK3CA.

It localises to the nucleus. It is found in the nucleolus. Its function is as follows. Recognizes the ribosomal RNA gene promoter and activates transcription mediated by RNA polymerase I through cooperative interactions with the transcription factor SL1/TIF-IB complex. It binds specifically to the upstream control element. This Mus musculus (Mouse) protein is Nucleolar transcription factor 1 (Ubtf).